Reading from the N-terminus, the 275-residue chain is Adenylate kinase (275 aa).

An ATP-binding site is contributed by glycine 54–threonine 59. An NMP region spans residues alanine 74–valine 103. Residues threonine 75, arginine 80, glycine 101 to valine 103, glycine 130 to arginine 133, and glutamine 137 contribute to the AMP site. Positions glycine 171 to aspartate 208 are LID. Residues arginine 172 and serine 181–tyrosine 182 contribute to the ATP site. 2 residues coordinate AMP: arginine 205 and arginine 216. Residue glutamine 244 coordinates ATP.

This sequence belongs to the adenylate kinase family. AK2 subfamily. Monomer.

The protein localises to the cytoplasm. It is found in the cytosol. Its subcellular location is the mitochondrion intermembrane space. The enzyme catalyses AMP + ATP = 2 ADP. Functionally, catalyzes the reversible transfer of the terminal phosphate group between ATP and AMP. Plays an important role in cellular energy homeostasis and in adenine nucleotide metabolism. Adenylate kinase activity is critical for regulation of the phosphate utilization and the AMP de novo biosynthesis pathways. The sequence is that of Adenylate kinase (adk1) from Sclerotinia sclerotiorum (strain ATCC 18683 / 1980 / Ss-1) (White mold).